The chain runs to 206 residues: Carbonic anhydrase (206 aa).

An Isoglutamyl lysine isopeptide (Lys-Gln) (interchain with Q-Cter in protein Pup) cross-link involves residue Lys-11. Zn(2+)-binding residues include Cys-51, Asp-53, His-104, and Cys-107.

The protein belongs to the beta-class carbonic anhydrase family. In terms of assembly, homotetramer. It depends on Zn(2+) as a cofactor.

The catalysed reaction is hydrogencarbonate + H(+) = CO2 + H2O. Catalyzes the reversible hydration of carbon dioxide to form bicarbonate. In Mycolicibacterium smegmatis (strain ATCC 700084 / mc(2)155) (Mycobacterium smegmatis), this protein is Carbonic anhydrase (cynT).